The chain runs to 76 residues: UPF0291 protein MW2494 (76 aa).

Belongs to the UPF0291 family.

It localises to the cytoplasm. The protein is UPF0291 protein MW2494 of Staphylococcus aureus (strain MW2).